A 768-amino-acid polypeptide reads, in one-letter code: U-box domain-containing protein 45 (768 aa).

A U-box domain is found at 278-352 (VPPEELRCPI…SSWCEQNGVQ (75 aa)). 5 ARM repeats span residues 454–497 (EEAR…NLAV), 500–540 (NRNK…CLEE), 542–579 (KPVI…HLST), 581–620 (PPNI…NLVL), and 623–662 (AGKD…ILCN).

Binds to SD129.

The catalysed reaction is S-ubiquitinyl-[E2 ubiquitin-conjugating enzyme]-L-cysteine + [acceptor protein]-L-lysine = [E2 ubiquitin-conjugating enzyme]-L-cysteine + N(6)-ubiquitinyl-[acceptor protein]-L-lysine.. It participates in protein modification; protein ubiquitination. Functionally, functions as an E3 ubiquitin ligase. In Arabidopsis thaliana (Mouse-ear cress), this protein is U-box domain-containing protein 45 (PUB45).